We begin with the raw amino-acid sequence, 944 residues long: MTQLASSYDPSSFESRLYAQWESAGHFKPSGSGEPYTVLLPPPNVTGTLHMGHAFQQTLMDALVRYHRMRGYDTLWQVGTDHAGIATEMVVSRNLALEGKGETRDTLGREGFIAKVWEWKAQSGDTIERQMRRLGTSSDWSRSTFTMDPQPSAAVTEAFVRWYEQGLIYRGQRLVNWDPVLKTAISDLEVENVEEDGFLWSIRYPLADGVTYEHVEHDADGVETLRETRDYLVVATTRPETMLGDTAVMVHPDDARYATLHAAQIVLPLTGRLVPVITDDYVDRAFGTGVVKVTPAHDFNDYQVGVRHDLPLINLFTVTAAINDNAPERYRGLDRYDARKLVLSELEDLGLLVETKPHKLQVPRGDRTGQVIEPYLTDQWFVKMDALAKRGLELVESGQVKFVPPNWINTYRHWMENIQDWCISRQLWWGHRIPAWFDEAGKCYVGHDEAQVRATHGLGAEVALHQDSDVLETWFSSQLWPFSTLGWPDAQAMDERGFARYLPSSVLVTGFDIIFFWVARMIMATDSFTGQVPFRDVYITGLIRDAQGQKMSKSKGNVLDPLDIIDGISIEDLVAKRTSGLMQPRMAEKIEKATRKEFPDGIIAHGADALRFTIAALATHGRDIKFDLGRAEGYKNFCNKLWNATRFALMNTEGAQFSGVPQPQTETERWILARLDAVAAEAQAHYANYRFDLLAQTLYEFAWNAFCDWFVELAKPALNGAVQDAADSTRHTLLYVLEALLRLLHPLTPFVTEELWQQVAPRLGITGDTISLQAFPQRGDVDTSGYAGAEADIEWLKAMVSALRRVRSELNVPPSKQVRLWLQAGSSDDRARVARFASQLAFLLKLEAIDWLAAGQEAPPAAAAIVGELTLLVPLEGLVDMDAERTRLDKEIKRVESEIGKCNGKLGNATFVQNAPAAVVEQERARLNDWTTQLTGLREQRAKL.

The short motif at 43-53 (PNVTGTLHMGH) is the 'HIGH' region element. A 'KMSKS' region motif is present at residues 550-554 (KMSKS). K553 lines the ATP pocket. Residues 878–944 (LVDMDAERTR…TGLREQRAKL (67 aa)) adopt a coiled-coil conformation.

This sequence belongs to the class-I aminoacyl-tRNA synthetase family. ValS type 1 subfamily. In terms of assembly, monomer.

Its subcellular location is the cytoplasm. It catalyses the reaction tRNA(Val) + L-valine + ATP = L-valyl-tRNA(Val) + AMP + diphosphate. Functionally, catalyzes the attachment of valine to tRNA(Val). As ValRS can inadvertently accommodate and process structurally similar amino acids such as threonine, to avoid such errors, it has a 'posttransfer' editing activity that hydrolyzes mischarged Thr-tRNA(Val) in a tRNA-dependent manner. The chain is Valine--tRNA ligase from Xanthomonas campestris pv. campestris (strain B100).